The following is an 86-amino-acid chain: Anti-adapter protein IraP (86 aa).

Residues 1–36 are a coiled coil; that stretch reads MKNLIAELLFKLAQKEEESKELCAQVEALEIIVTAM.

It belongs to the IraP family. In terms of assembly, interacts with RssB.

It localises to the cytoplasm. Its function is as follows. Inhibits RpoS proteolysis by regulating RssB activity, thereby increasing the stability of the sigma stress factor RpoS especially during phosphate starvation, but also in stationary phase and during nitrogen starvation. Its effect on RpoS stability is due to its interaction with RssB, which probably blocks the interaction of RssB with RpoS, and the consequent delivery of the RssB-RpoS complex to the ClpXP protein degradation pathway. In Escherichia coli O7:K1 (strain IAI39 / ExPEC), this protein is Anti-adapter protein IraP.